The following is a 497-amino-acid chain: UPF0371 protein DIP2346 (497 aa).

It belongs to the UPF0371 family.

This Corynebacterium diphtheriae (strain ATCC 700971 / NCTC 13129 / Biotype gravis) protein is UPF0371 protein DIP2346.